We begin with the raw amino-acid sequence, 241 residues long: tRNA pseudouridine synthase A (241 aa).

The active-site Nucleophile is Asp51. Tyr110 contacts substrate.

This sequence belongs to the tRNA pseudouridine synthase TruA family. Homodimer.

The enzyme catalyses uridine(38/39/40) in tRNA = pseudouridine(38/39/40) in tRNA. Formation of pseudouridine at positions 38, 39 and 40 in the anticodon stem and loop of transfer RNAs. The polypeptide is tRNA pseudouridine synthase A (Campylobacter jejuni subsp. jejuni serotype O:2 (strain ATCC 700819 / NCTC 11168)).